The sequence spans 497 residues: Glycerol kinase (497 aa).

Position 12 (T12) interacts with ADP. ATP-binding residues include T12, T13, and S14. A sn-glycerol 3-phosphate-binding site is contributed by T12. ADP is bound at residue R16. Residues R82, E83, Y134, and D243 each coordinate sn-glycerol 3-phosphate. Glycerol is bound by residues R82, E83, Y134, D243, and Q244. 2 residues coordinate ADP: T265 and G308. ATP contacts are provided by T265, G308, Q312, and G411. G411 lines the ADP pocket.

Belongs to the FGGY kinase family.

The catalysed reaction is glycerol + ATP = sn-glycerol 3-phosphate + ADP + H(+). It functions in the pathway polyol metabolism; glycerol degradation via glycerol kinase pathway; sn-glycerol 3-phosphate from glycerol: step 1/1. Its activity is regulated as follows. Inhibited by fructose 1,6-bisphosphate (FBP). Key enzyme in the regulation of glycerol uptake and metabolism. Catalyzes the phosphorylation of glycerol to yield sn-glycerol 3-phosphate. This Sinorhizobium fredii (strain NBRC 101917 / NGR234) protein is Glycerol kinase.